Reading from the N-terminus, the 273-residue chain is 2,3,4,5-tetrahydropyridine-2,6-dicarboxylate N-succinyltransferase (273 aa).

Residues Arg104 and Asp141 each contribute to the substrate site.

Belongs to the transferase hexapeptide repeat family. In terms of assembly, homotrimer.

It localises to the cytoplasm. The enzyme catalyses (S)-2,3,4,5-tetrahydrodipicolinate + succinyl-CoA + H2O = (S)-2-succinylamino-6-oxoheptanedioate + CoA. The protein operates within amino-acid biosynthesis; L-lysine biosynthesis via DAP pathway; LL-2,6-diaminopimelate from (S)-tetrahydrodipicolinate (succinylase route): step 1/3. This chain is 2,3,4,5-tetrahydropyridine-2,6-dicarboxylate N-succinyltransferase, found in Acinetobacter baylyi (strain ATCC 33305 / BD413 / ADP1).